The primary structure comprises 343 residues: Ribosomal RNA small subunit methyltransferase C (343 aa).

Belongs to the methyltransferase superfamily. RsmC family. As to quaternary structure, monomer.

The protein resides in the cytoplasm. It catalyses the reaction guanosine(1207) in 16S rRNA + S-adenosyl-L-methionine = N(2)-methylguanosine(1207) in 16S rRNA + S-adenosyl-L-homocysteine + H(+). In terms of biological role, specifically methylates the guanine in position 1207 of 16S rRNA in the 30S particle. This Escherichia coli (strain K12 / DH10B) protein is Ribosomal RNA small subunit methyltransferase C.